Here is a 207-residue protein sequence, read N- to C-terminus: U1 small nuclear ribonucleoprotein C (207 aa).

The Matrin-type zinc finger occupies Tyr4–Ile36. 2 stretches are compositionally biased toward pro residues: residues Pro105–Val115 and Pro122–Gln131. A disordered region spans residues Pro105–Glu207. The span at Asn132–Pro144 shows a compositional bias: low complexity. Over residues Gly162–Pro183 the composition is skewed to pro residues. A compositionally biased stretch (low complexity) spans Pro184–Glu207.

It belongs to the U1 small nuclear ribonucleoprotein C family. U1 snRNP is composed of the 7 core Sm proteins B/B', D1, D2, D3, E, F and G that assemble in a heptameric protein ring on the Sm site of the small nuclear RNA to form the core snRNP, and at least 3 U1 snRNP-specific proteins U1-70K, U1-A and U1-C. U1-C interacts with U1 snRNA and the 5' splice-site region of the pre-mRNA.

It localises to the nucleus. In terms of biological role, component of the spliceosomal U1 snRNP, which is essential for recognition of the pre-mRNA 5' splice-site and the subsequent assembly of the spliceosome. U1-C is directly involved in initial 5' splice-site recognition for both constitutive and regulated alternative splicing. The interaction with the 5' splice-site seems to precede base-pairing between the pre-mRNA and the U1 snRNA. Stimulates commitment or early (E) complex formation by stabilizing the base pairing of the 5' end of the U1 snRNA and the 5' splice-site region. In Arabidopsis thaliana (Mouse-ear cress), this protein is U1 small nuclear ribonucleoprotein C.